Consider the following 322-residue polypeptide: MMAEKHGVLLVNLGTPSAATPAAVKAYLAEFLSDRRVVDLPSWQWQPLLRGLILPRRAPRVARLYQSIWTAQGSPLLYYSQRLCDGLQARLGEAIPVVLGMSYGEPSLDRALSALSDAGVTQLTVVPLYPQYSCSTSAAVFDGVAAWLARQRCIPALRFVRDYAQHPAYIAALCQRIRCSIAEHGQPDILLFSYHGIPQRYAAEGDDYPQRCLATTQAVVQALGLMPSQYAVSFQSRFGREPWLTPYTDETVVALATGGVRHLQVICPGFAADCLETLEEIAVQNREAFLAAGGHHFAYIPALNDDDMQITLLQQLVAATPA.

Fe cation contacts are provided by H195 and E276.

It belongs to the ferrochelatase family.

Its subcellular location is the cytoplasm. It catalyses the reaction heme b + 2 H(+) = protoporphyrin IX + Fe(2+). The protein operates within porphyrin-containing compound metabolism; protoheme biosynthesis; protoheme from protoporphyrin-IX: step 1/1. In terms of biological role, catalyzes the ferrous insertion into protoporphyrin IX. The polypeptide is Ferrochelatase (Edwardsiella ictaluri (strain 93-146)).